The sequence spans 384 residues: Deoxyguanosinetriphosphate triphosphohydrolase-like protein (384 aa).

The segment at 13 to 42 is disordered; it reads LASYASDPSKTRGRRHSEPPPENRTEFQRD. Positions 28–42 are enriched in basic and acidic residues; it reads HSEPPPENRTEFQRD. The 136-residue stretch at 73–208 folds into the HD domain; the sequence is RLTHSLEVAQ…ANLADEVAYN (136 aa).

This sequence belongs to the dGTPase family. Type 2 subfamily.

In Bordetella bronchiseptica (strain ATCC BAA-588 / NCTC 13252 / RB50) (Alcaligenes bronchisepticus), this protein is Deoxyguanosinetriphosphate triphosphohydrolase-like protein.